The sequence spans 80 residues: Conotoxin Ca11.3 (80 aa).

Residues 1-19 form the signal peptide; the sequence is MKLVLAIVVILMLLSLSTG. A propeptide spanning residues 20–42 is cleaved from the precursor; it reads AEMSDNHASRSATALRDRLLSPK. 4 disulfides stabilise this stretch: Cys-46–Cys-60, Cys-53–Cys-65, Cys-59–Cys-72, and Cys-64–Cys-79.

The protein belongs to the conotoxin I3 superfamily. In terms of tissue distribution, expressed by the venom duct.

The protein resides in the secreted. This Conus caracteristicus (Characteristic cone) protein is Conotoxin Ca11.3.